Here is a 298-residue protein sequence, read N- to C-terminus: MAHPEQQYLDLLAQTLERGDRRVDRTGVGTLSLFGAMLRFDLSGGQVPILTTKRVYWKTAVKEMLWFLTGGTNIRPLLQENVRIWSDWPLAAYRRESGEEISQAAFEQRVLEDEAFAARWGELGPVYGKQWRRWLGPDGHEHDQIAALIETLRTNPSSRRMLFHAWNVAEVGQMALPPCHMVYQYHVTSDGRLNALLYQRSVDLLLGAPFNFVGAAALQLMIAQQAGLVPGDLVWVGGDTHLYLNHLDQAREQTGRAPRDWPRMRLLRRADSIDDYRIEDFAVEGYDPHPAIAAEVAV.

Residues Arg-25 and 159–160 (RR) contribute to the dUMP site. Cys-179 serves as the catalytic Nucleophile. DUMP is bound by residues 200–203 (RSVD), Asn-211, and 241–243 (HLY). Asp-203 provides a ligand contact to (6R)-5,10-methylene-5,6,7,8-tetrahydrofolate. Ala-297 lines the (6R)-5,10-methylene-5,6,7,8-tetrahydrofolate pocket.

This sequence belongs to the thymidylate synthase family. Bacterial-type ThyA subfamily. In terms of assembly, homodimer.

The protein resides in the cytoplasm. The catalysed reaction is dUMP + (6R)-5,10-methylene-5,6,7,8-tetrahydrofolate = 7,8-dihydrofolate + dTMP. It functions in the pathway pyrimidine metabolism; dTTP biosynthesis. Its function is as follows. Catalyzes the reductive methylation of 2'-deoxyuridine-5'-monophosphate (dUMP) to 2'-deoxythymidine-5'-monophosphate (dTMP) while utilizing 5,10-methylenetetrahydrofolate (mTHF) as the methyl donor and reductant in the reaction, yielding dihydrofolate (DHF) as a by-product. This enzymatic reaction provides an intracellular de novo source of dTMP, an essential precursor for DNA biosynthesis. In Cereibacter sphaeroides (strain ATCC 17023 / DSM 158 / JCM 6121 / CCUG 31486 / LMG 2827 / NBRC 12203 / NCIMB 8253 / ATH 2.4.1.) (Rhodobacter sphaeroides), this protein is Thymidylate synthase.